The primary structure comprises 222 residues: UPF0502 protein PBPRB0676 (222 aa).

The protein belongs to the UPF0502 family.

The polypeptide is UPF0502 protein PBPRB0676 (Photobacterium profundum (strain SS9)).